Here is a 255-residue protein sequence, read N- to C-terminus: 5-oxoprolinase subunit A (255 aa).

The protein belongs to the LamB/PxpA family. Forms a complex composed of PxpA, PxpB and PxpC.

It carries out the reaction 5-oxo-L-proline + ATP + 2 H2O = L-glutamate + ADP + phosphate + H(+). In terms of biological role, catalyzes the cleavage of 5-oxoproline to form L-glutamate coupled to the hydrolysis of ATP to ADP and inorganic phosphate. This chain is 5-oxoprolinase subunit A, found in Nitrobacter winogradskyi (strain ATCC 25391 / DSM 10237 / CIP 104748 / NCIMB 11846 / Nb-255).